A 132-amino-acid polypeptide reads, in one-letter code: UPF0329 protein ECU07_0050/ECU09_2020 (132 aa).

The protein belongs to the UPF0329 family.

This Encephalitozoon cuniculi (strain GB-M1) (Microsporidian parasite) protein is UPF0329 protein ECU07_0050/ECU09_2020.